The primary structure comprises 203 residues: Na(+)-translocating NADH-quinone reductase subunit E (203 aa).

A run of 6 helical transmembrane segments spans residues 12-32 (AVFVENMALAFFLGMCTFLAL), 36-56 (MEAAIGLGIAVVVVLSVTVPV), 82-102 (FLGLLTYIGVIAAIVQILEMV), 115-135 (GVFLPLITVNCAIMGASLFMV), 145-165 (LVYGFGAGLGWALAIIALAGI), and 181-201 (LGITFITVGLMSLGFMSFSGI).

The protein belongs to the NqrDE/RnfAE family. As to quaternary structure, composed of six subunits; NqrA, NqrB, NqrC, NqrD, NqrE and NqrF.

It is found in the cell inner membrane. It carries out the reaction a ubiquinone + n Na(+)(in) + NADH + H(+) = a ubiquinol + n Na(+)(out) + NAD(+). Functionally, NQR complex catalyzes the reduction of ubiquinone-1 to ubiquinol by two successive reactions, coupled with the transport of Na(+) ions from the cytoplasm to the periplasm. NqrA to NqrE are probably involved in the second step, the conversion of ubisemiquinone to ubiquinol. The protein is Na(+)-translocating NADH-quinone reductase subunit E of Hahella chejuensis (strain KCTC 2396).